A 104-amino-acid polypeptide reads, in one-letter code: Large ribosomal subunit protein uL24 (104 aa).

Belongs to the universal ribosomal protein uL24 family. In terms of assembly, part of the 50S ribosomal subunit.

Functionally, one of two assembly initiator proteins, it binds directly to the 5'-end of the 23S rRNA, where it nucleates assembly of the 50S subunit. One of the proteins that surrounds the polypeptide exit tunnel on the outside of the subunit. The sequence is that of Large ribosomal subunit protein uL24 from Pseudoalteromonas atlantica (strain T6c / ATCC BAA-1087).